A 389-amino-acid polypeptide reads, in one-letter code: Calreticulin (389 aa).

The N-terminal stretch at methionine 1 to alanine 13 is a signal peptide. An N-domain region spans residues serine 12–aspartate 189. Positions 20, 52, and 53 each coordinate Ca(2+). Residues cysteine 96 and cysteine 130 are joined by a disulfide bond. An alpha-D-glucoside is bound by residues tyrosine 100, lysine 102, tyrosine 121, and aspartate 128. A run of 7 repeats spans residues lysine 183 to methionine 194, aspartate 202 to aspartate 213, aspartate 219 to aspartate 230, aspartate 237 to aspartate 248, glycine 252 to proline 262, glycine 266 to proline 276, and glycine 280 to proline 290. Positions lysine 183–aspartate 248 are 4 X approximate repeats. The P-domain stretch occupies residues glutamate 190 to tyrosine 301. The segment covering aspartate 213 to proline 232 has biased composition (basic and acidic residues). Residues aspartate 213–alanine 256 are disordered. Residues glycine 252 to proline 290 form a 3 X approximate repeats region. The segment at aspartate 302–leucine 389 is C-domain. Aspartate 310 contacts an alpha-D-glucoside. Aspartate 321 provides a ligand contact to Ca(2+). Residues isoleucine 329–glutamate 388 adopt a coiled-coil conformation. A disordered region spans residues lysine 347–leucine 389. The short motif at lysine 386–leucine 389 is the Prevents secretion from ER element.

Belongs to the calreticulin family. As to quaternary structure, interacts (via C-terminus) with host C1q.

The protein resides in the endoplasmic reticulum lumen. Its subcellular location is the cell projection. It is found in the uropodium. The protein localises to the cell surface. It localises to the phagocytic cup. Molecular calcium-binding chaperone promoting folding, oligomeric assembly and quality control in the ER via the calreticulin/calnexin cycle. This lectin may interact transiently with almost all of the monoglucosylated glycoproteins that are synthesized in the ER. Plays a role in host cell phagocytosis, possibly by acting as a receptor for host C1q. Binding to C1q prevents the activation of the host classical complement pathway. Also, binds to apoptotic host cells independently of host C1q and collectins. The protein is Calreticulin of Entamoeba histolytica (strain ATCC 30459 / HM-1:IMSS / ABRM).